The chain runs to 376 residues: O-demethylpuromycin-O-methyltransferase (376 aa).

The tract at residues 1 to 28 is disordered; sequence MAPTEATRGGPADPAPAPEAHRGGHTEH. Over residues 19–28 the composition is skewed to basic and acidic residues; that stretch reads EAHRGGHTEH. S-adenosyl-L-methionine-binding positions include aspartate 235 and 261–263; that span reads GDF. The active-site Proton acceptor is histidine 281.

The protein belongs to the class I-like SAM-binding methyltransferase superfamily. Cation-independent O-methyltransferase family.

It catalyses the reaction O-demethylpuromycin + S-adenosyl-L-methionine = puromycin + S-adenosyl-L-homocysteine + H(+). The polypeptide is O-demethylpuromycin-O-methyltransferase (dmpM) (Streptomyces alboniger).